A 357-amino-acid chain; its full sequence is Probable butyrate kinase 1 (357 aa).

This sequence belongs to the acetokinase family.

Its subcellular location is the cytoplasm. The enzyme catalyses butanoate + ATP = butanoyl phosphate + ADP. This Thermotoga maritima (strain ATCC 43589 / DSM 3109 / JCM 10099 / NBRC 100826 / MSB8) protein is Probable butyrate kinase 1.